Here is a 215-residue protein sequence, read N- to C-terminus: MSAHTTAQSAQYNQSATQAALVPMVVEQSARGERSFDIFSRLLRERVIFLTGQVEDHMANLIVAQLLFLEAENPDKDIHLYINSPGGSVSAGLAIFDTMNFIKPEVSTICMGGAYSMGSFLLAAGEKGKRYALANARVMIHQPSGGAQGQATDIEINAREILKTRARLNEILAERTGQPVDKIEKDVERDYWLDAKEAKEYGLIDEVLERRPASL.

The Nucleophile role is filled by Ser116. The active site involves His141.

Belongs to the peptidase S14 family. In terms of assembly, fourteen ClpP subunits assemble into 2 heptameric rings which stack back to back to give a disk-like structure with a central cavity, resembling the structure of eukaryotic proteasomes.

It localises to the cytoplasm. The catalysed reaction is Hydrolysis of proteins to small peptides in the presence of ATP and magnesium. alpha-casein is the usual test substrate. In the absence of ATP, only oligopeptides shorter than five residues are hydrolyzed (such as succinyl-Leu-Tyr-|-NHMec, and Leu-Tyr-Leu-|-Tyr-Trp, in which cleavage of the -Tyr-|-Leu- and -Tyr-|-Trp bonds also occurs).. Its function is as follows. Cleaves peptides in various proteins in a process that requires ATP hydrolysis. Has a chymotrypsin-like activity. Plays a major role in the degradation of misfolded proteins. The chain is ATP-dependent Clp protease proteolytic subunit from Psychrobacter cryohalolentis (strain ATCC BAA-1226 / DSM 17306 / VKM B-2378 / K5).